The chain runs to 143 residues: Hemoglobin subunit alpha-2 (143 aa).

S2 is subject to N-acetylserine. A Globin domain is found at 2–143 (SLSSKQKATV…LALALAEKYR (142 aa)). H60 lines the O2 pocket. Residue H89 participates in heme b binding.

Belongs to the globin family. As to quaternary structure, hb 2 is a heterotetramer of two alpha-2 and two beta-2 chains. As to expression, red blood cells.

Its function is as follows. Involved in oxygen transport from gills to the various peripheral tissues. This Gadus morhua (Atlantic cod) protein is Hemoglobin subunit alpha-2 (hba2).